A 418-amino-acid polypeptide reads, in one-letter code: Beta-arrestin-1 (418 aa).

An interaction with SRC region spans residues 1–163; the sequence is MGDKGTRVFK…LEEKIHKRNS (163 aa). Residues 45–86 form an interaction with CHRM2 region; sequence PEYLKERRVYVTLTCAFRYGREDLDVLGLTFRKDLFVANVQS. Residue Y47 is modified to Phosphotyrosine. The 1D-myo-inositol hexakisphosphate site is built by K250, M255, K324, and K326. The interaction with TRAF6 stretch occupies residues 318-418; that stretch reads IVSYKVKVKL…GTGSPQLNNR (101 aa). The interval 353–375 is disordered; the sequence is HPKPKEEPPHREVPENETPVDTN. Residues 355–366 are compositionally biased toward basic and acidic residues; the sequence is KPKEEPPHREVP. The short motif at 385-395 is the [DE]-X(1,2)-F-X-X-[FL]-X-X-X-R motif element; it reads DIVFEDFARQR. A disordered region spans residues 397-418; the sequence is KGMKDDKEEEEDGTGSPQLNNR. The residue at position 412 (S412) is a Phosphoserine; by GRK5.

Belongs to the arrestin family. As to quaternary structure, monomer. Homodimer. Homooligomer; the self-association is mediated by InsP6-binding. Heterooligomer with ARRB2; the association is mediated by InsP6-binding. Interacts with GPR143. Interacts with ADRB2 (phosphorylated). Interacts with CHRM2 (phosphorylated). Interacts with LHCGR. Interacts with CYTH2 and CASR. Interacts with AP2B1 (dephosphorylated at 'Tyr-737'); phosphorylation of AP2B1 at 'Tyr-737' disrupts the interaction. Interacts (dephosphorylated at Ser-412) with CLTC. Interacts with CCR2 and GRK2. Interacts with CRR5. Interacts with PTAFR (phosphorylated on serine residues). Interacts with CLTC and MAP2K3. Interacts with CREB1. Interacts with TRAF6. Interacts with IGF1R and MDM2. Interacts with C5AR1. Interacts with PDE4D. Interacts with SRC (via the SH3 domain and the protein kinase domain); the interaction is independent of the phosphorylation state of SRC C-terminus. Interacts with TACR1. Interacts with RAF1. Interacts with CHUK, IKBKB and MAP3K14. Interacts with DVL1; the interaction is enhanced by phosphorylation of DVL1. Interacts with DVL2; the interaction is enhanced by phosphorylation of DVL2. Interacts with IGF1R. Associates with MAP kinase p38. Part of a MAPK signaling complex consisting of TACR1, ARRB1, SRC, MAPK1 (activated) and MAPK3 (activated). Part of a MAPK signaling complex consisting of F2RL1, ARRB1, RAF1, MAPK1 (activated) and MAPK3 (activated). Interacts with MAP2K4/MKK4. Interacts with HCK and CXCR1 (phosphorylated). Interacts with ACKR3 and ACKR4. Interacts with ARRDC1; the interaction is direct. Interacts with GPR61, GPR62 and GPR135. Post-translationally, constitutively phosphorylated at Ser-412 in the cytoplasm. At the plasma membrane, is rapidly dephosphorylated, a process that is required for clathrin binding and ADRB2 endocytosis but not for ADRB2 binding and desensitization. Once internalized, is rephosphorylated. The ubiquitination status appears to regulate the formation and trafficking of beta-arrestin-GPCR complexes and signaling. Ubiquitination appears to occur GPCR-specific. Ubiquitinated by MDM2; the ubiquitination is required for rapid internalization of ADRB2. Deubiquitinated by USP33; the deubiquitination leads to a dissociation of the beta-arrestin-GPCR complex. Stimulation of a class A GPCR, such as ADRB2, induces transient ubiquitination and subsequently promotes association with USP33.

The protein resides in the cytoplasm. It localises to the nucleus. It is found in the cell membrane. Its subcellular location is the membrane. The protein localises to the clathrin-coated pit. The protein resides in the cell projection. It localises to the pseudopodium. It is found in the cytoplasmic vesicle. Functionally, functions in regulating agonist-mediated G-protein coupled receptor (GPCR) signaling by mediating both receptor desensitization and resensitization processes. During homologous desensitization, beta-arrestins bind to the GPRK-phosphorylated receptor and sterically preclude its coupling to the cognate G-protein; the binding appears to require additional receptor determinants exposed only in the active receptor conformation. The beta-arrestins target many receptors for internalization by acting as endocytic adapters (CLASPs, clathrin-associated sorting proteins) and recruiting the GPRCs to the adapter protein 2 complex 2 (AP-2) in clathrin-coated pits (CCPs). However, the extent of beta-arrestin involvement appears to vary significantly depending on the receptor, agonist and cell type. Internalized arrestin-receptor complexes traffic to intracellular endosomes, where they remain uncoupled from G-proteins. Two different modes of arrestin-mediated internalization occur. Class A receptors, like ADRB2, OPRM1, ENDRA, D1AR and ADRA1B dissociate from beta-arrestin at or near the plasma membrane and undergo rapid recycling. Class B receptors, like AVPR2, AGTR1, NTSR1, TRHR and TACR1 internalize as a complex with arrestin and traffic with it to endosomal vesicles, presumably as desensitized receptors, for extended periods of time. Receptor resensitization then requires that receptor-bound arrestin is removed so that the receptor can be dephosphorylated and returned to the plasma membrane. Involved in internalization of P2RY4 and UTP-stimulated internalization of P2RY2. Involved in phosphorylation-dependent internalization of OPRD1 ands subsequent recycling. Involved in the degradation of cAMP by recruiting cAMP phosphodiesterases to ligand-activated receptors. Beta-arrestins function as multivalent adapter proteins that can switch the GPCR from a G-protein signaling mode that transmits short-lived signals from the plasma membrane via small molecule second messengers and ion channels to a beta-arrestin signaling mode that transmits a distinct set of signals that are initiated as the receptor internalizes and transits the intracellular compartment. Acts as a signaling scaffold for MAPK pathways such as MAPK1/3 (ERK1/2). ERK1/2 activated by the beta-arrestin scaffold is largely excluded from the nucleus and confined to cytoplasmic locations such as endocytic vesicles, also called beta-arrestin signalosomes. Recruits c-Src/SRC to ADRB2 resulting in ERK activation. GPCRs for which the beta-arrestin-mediated signaling relies on both ARRB1 and ARRB2 (codependent regulation) include ADRB2, F2RL1 and PTH1R. For some GPCRs the beta-arrestin-mediated signaling relies on either ARRB1 or ARRB2 and is inhibited by the other respective beta-arrestin form (reciprocal regulation). Inhibits ERK1/2 signaling in AGTR1- and AVPR2-mediated activation (reciprocal regulation). Is required for SP-stimulated endocytosis of NK1R and recruits c-Src/SRC to internalized NK1R resulting in ERK1/2 activation, which is required for the antiapoptotic effects of SP. Is involved in proteinase-activated F2RL1-mediated ERK activity. Acts as a signaling scaffold for the AKT1 pathway. Is involved in alpha-thrombin-stimulated AKT1 signaling. Is involved in IGF1-stimulated AKT1 signaling leading to increased protection from apoptosis. Involved in activation of the p38 MAPK signaling pathway and in actin bundle formation. Involved in F2RL1-mediated cytoskeletal rearrangement and chemotaxis. Involved in AGTR1-mediated stress fiber formation by acting together with GNAQ to activate RHOA. Appears to function as signaling scaffold involved in regulation of MIP-1-beta-stimulated CCR5-dependent chemotaxis. Involved in attenuation of NF-kappa-B-dependent transcription in response to GPCR or cytokine stimulation by interacting with and stabilizing CHUK. May serve as nuclear messenger for GPCRs. Involved in OPRD1-stimulated transcriptional regulation by translocating to CDKN1B and FOS promoter regions and recruiting EP300 resulting in acetylation of histone H4. Involved in regulation of LEF1 transcriptional activity via interaction with DVL1 and/or DVL2 Also involved in regulation of receptors other than GPCRs. Involved in Toll-like receptor and IL-1 receptor signaling through the interaction with TRAF6 which prevents TRAF6 autoubiquitination and oligomerization required for activation of NF-kappa-B and JUN. Binds phosphoinositides. Binds inositolhexakisphosphate (InsP6). Involved in IL8-mediated granule release in neutrophils. Required for atypical chemokine receptor ACKR2-induced RAC1-LIMK1-PAK1-dependent phosphorylation of cofilin (CFL1) and for the up-regulation of ACKR2 from endosomal compartment to cell membrane, increasing its efficiency in chemokine uptake and degradation. Involved in the internalization of the atypical chemokine receptor ACKR3. Negatively regulates the NOTCH signaling pathway by mediating the ubiquitination and degradation of NOTCH1 by ITCH. Participates in the recruitment of the ubiquitin-protein ligase to the receptor. The protein is Beta-arrestin-1 (ARRB1) of Homo sapiens (Human).